The sequence spans 218 residues: Adenylate kinase (218 aa).

10–15 (GAGKGT) contacts ATP. The segment at 30–59 (STGDMLRAAVKAGTPLGLEAKKVMDAGGLV) is NMP. AMP contacts are provided by residues Thr31, Arg36, 57–59 (GLV), 85–88 (GFPR), and Gln92. An LID region spans residues 122 to 159 (GRRVHPASGRSYHVRFNPPKAEGVDDVTGEPLVQRDDD). ATP is bound by residues Arg123 and 132-133 (SY). Residues Arg156 and Arg167 each contribute to the AMP site. Residue Gly203 participates in ATP binding.

This sequence belongs to the adenylate kinase family. As to quaternary structure, monomer.

The protein resides in the cytoplasm. It catalyses the reaction AMP + ATP = 2 ADP. Its pathway is purine metabolism; AMP biosynthesis via salvage pathway; AMP from ADP: step 1/1. Functionally, catalyzes the reversible transfer of the terminal phosphate group between ATP and AMP. Plays an important role in cellular energy homeostasis and in adenine nucleotide metabolism. The sequence is that of Adenylate kinase from Bordetella bronchiseptica (strain ATCC BAA-588 / NCTC 13252 / RB50) (Alcaligenes bronchisepticus).